The following is a 191-amino-acid chain: Elongation factor P (191 aa).

K34 bears the N6-(3,6-diaminohexanoyl)-5-hydroxylysine mark.

Belongs to the elongation factor P family. May be beta-lysylated on the epsilon-amino group of Lys-34 by the combined action of EpmA and EpmB, and then hydroxylated on the C5 position of the same residue by EpmC (if this protein is present). Lysylation is critical for the stimulatory effect of EF-P on peptide-bond formation. The lysylation moiety may extend toward the peptidyltransferase center and stabilize the terminal 3-CCA end of the tRNA. Hydroxylation of the C5 position on Lys-34 may allow additional potential stabilizing hydrogen-bond interactions with the P-tRNA.

The protein resides in the cytoplasm. It functions in the pathway protein biosynthesis; polypeptide chain elongation. Functionally, involved in peptide bond synthesis. Alleviates ribosome stalling that occurs when 3 or more consecutive Pro residues or the sequence PPG is present in a protein, possibly by augmenting the peptidyl transferase activity of the ribosome. Modification of Lys-34 is required for alleviation. The sequence is that of Elongation factor P from Marinomonas sp. (strain MWYL1).